Reading from the N-terminus, the 284-residue chain is Pantothenate synthetase (284 aa).

Residue 30-37 coordinates ATP; it reads MGNLHEGH. Catalysis depends on His-37, which acts as the Proton donor. Gln-61 provides a ligand contact to (R)-pantoate. Gln-61 provides a ligand contact to beta-alanine. ATP is bound at residue 149–152; it reads GEKD. A (R)-pantoate-binding site is contributed by Gln-155. ATP-binding positions include Val-178 and 186–189; that span reads LSSR.

The protein belongs to the pantothenate synthetase family. As to quaternary structure, homodimer.

The protein localises to the cytoplasm. It carries out the reaction (R)-pantoate + beta-alanine + ATP = (R)-pantothenate + AMP + diphosphate + H(+). The protein operates within cofactor biosynthesis; (R)-pantothenate biosynthesis; (R)-pantothenate from (R)-pantoate and beta-alanine: step 1/1. Its function is as follows. Catalyzes the condensation of pantoate with beta-alanine in an ATP-dependent reaction via a pantoyl-adenylate intermediate. This Yersinia pestis bv. Antiqua (strain Antiqua) protein is Pantothenate synthetase.